The sequence spans 490 residues: Bifunctional pantoate ligase/cytidylate kinase (490 aa).

An ATP-binding site is contributed by 1–8; it reads MGGLHQGH. The pantoate--beta-alanine ligase stretch occupies residues 1 to 253; sequence MGGLHQGHAR…CGETRLIDHV (253 aa). H8 acts as the Proton donor in catalysis. Position 35 (Q35) interacts with (R)-pantoate. Q35 serves as a coordination point for beta-alanine. 124 to 127 is a binding site for ATP; sequence GEKD. Q130 serves as a coordination point for (R)-pantoate. ATP-binding positions include V153 and 161–164; that span reads ASSR. The interval 254–490 is cytidylate kinase; that stretch reads FIMTRSPIVA…AKEIWPTPQG (237 aa).

In the N-terminal section; belongs to the pantothenate synthetase family. This sequence in the C-terminal section; belongs to the cytidylate kinase family. Type 1 subfamily.

Its subcellular location is the cytoplasm. It catalyses the reaction (R)-pantoate + beta-alanine + ATP = (R)-pantothenate + AMP + diphosphate + H(+). It carries out the reaction CMP + ATP = CDP + ADP. The enzyme catalyses dCMP + ATP = dCDP + ADP. It participates in cofactor biosynthesis; (R)-pantothenate biosynthesis; (R)-pantothenate from (R)-pantoate and beta-alanine: step 1/1. Functionally, catalyzes the condensation of pantoate with beta-alanine in an ATP-dependent reaction via a pantoyl-adenylate intermediate. Catalyzes the transfer of a phosphate group from ATP to either CMP or dCMP to form CDP or dCDP and ADP, respectively. This Synechococcus sp. (strain WH7803) protein is Bifunctional pantoate ligase/cytidylate kinase.